A 430-amino-acid chain; its full sequence is Evolutionarily conserved signaling intermediate in Toll pathway, mitochondrial (430 aa).

The transit peptide at 1 to 48 (MSWVQATLLARGLCRAWGGICRAALPGTSISQVPRQLPRGLHCSAAPH) directs the protein to the mitochondrion. Positions 41-66 (LHCSAAPHSSEQSLVSSPPEPRQRPT) are disordered. Over residues 47-56 (PHSSEQSLVS) the composition is skewed to polar residues. A Glycyl lysine isopeptide (Lys-Gly) (interchain with G-Cter in ubiquitin) cross-link involves residue Lys372. The segment at 400–430 (LHTSSAGLEEPPPPEDHEEDDSRQRQQQGQS) is disordered. The span at 411 to 420 (PPPEDHEEDD) shows a compositional bias: acidic residues.

It belongs to the ECSIT family. In terms of assembly, interacts with MAP3K1, SMAD4 and TRAF6. Interacts with SMAD1 only after BMP4-treatment. Part of the mitochondrial complex I assembly/MCIA complex that comprises at least the core subunits TMEM126B, NDUFAF1, ECSIT and ACAD9 and complement subunits such as COA1 and TMEM186. Interacts with NDUFAF1. Interacts with ACAD9. Interacts with TRIM59. Interacts with TMEM70 and TMEM242. Interacts (when ubiquitinated) with NF-kappa-B subunits RELA and NFKB1. Interacts with RIGI, IFIT1 and MAVS; these interactions promote RLR-mediated type I IFN induction. Interacts with SQSTM1; this interaction inhibits TLR4 signaling via functional regulation of the TRAF6-ECSIT complex. Interacts with cereblon/CRBN; this interaction inhibits the ubiquitination of ECSIT. In terms of processing, ubiquitinated on Lys-372; leading to translocation in the nucleus together with RELA and NFKB1 and expression of NF-kappa-B-dependent genes.

It is found in the cytoplasm. It localises to the nucleus. Its subcellular location is the mitochondrion. In terms of biological role, adapter protein that plays a role in different signaling pathways including TLRs and IL-1 pathways or innate antiviral induction signaling. Plays a role in the activation of NF-kappa-B by forming a signal complex with TRAF6 and TAK1/MAP3K7 to activate TAK1/MAP3K7 leading to activation of IKKs. Once ubiquitinated, interacts with the dissociated RELA and NFKB1 proteins and translocates to the nucleus where it induces NF-kappa-B-dependent gene expression. Plays a role in innate antiviral immune response by bridging the pattern recognition receptors RIGI and MDA5/IFIT1 to the MAVS complex at the mitochondrion. Promotes proteolytic activation of MAP3K1. Involved in the BMP signaling pathway. Required for normal embryonic development. Its function is as follows. As part of the MCIA complex, involved in the assembly of the mitochondrial complex I. The protein is Evolutionarily conserved signaling intermediate in Toll pathway, mitochondrial of Macaca fascicularis (Crab-eating macaque).